The chain runs to 34 residues: DDIT3 upstream open reading frame protein (34 aa).

Interacts with DDIT3 (isoform 1).

Its subcellular location is the nucleus. It localises to the cytoplasm. In terms of biological role, product of the upstream open reading frame (uORF) of DDIT3/CHOP that is specifically produced in absence of stress, thereby preventing translation of downstream stress effector DDIT3/CHOP. This chain is DDIT3 upstream open reading frame protein, found in Mus musculus (Mouse).